A 211-amino-acid polypeptide reads, in one-letter code: Arginine exporter protein ArgO (211 aa).

A run of 6 helical transmembrane segments spans residues 1–21 (MISYYFQGFALGAAMILPLGP), 37–57 (LMIALLCALSDLVLISAGIFG), 68–88 (LLALVTWGGVAFLLWYGFGAL), 111–131 (IIATMLAVTWLNPHVYLDTFV), 147–167 (WFALGTISASFLWFFGLALLA), and 179–199 (AQRIINILVGVVMWLIAFQLA).

Belongs to the LysE/ArgO transporter (TC 2.A.75) family.

It is found in the cell inner membrane. The catalysed reaction is L-arginine(in) = L-arginine(out). Involved in the export of arginine. Important to control the intracellular level of arginine and the correct balance between arginine and lysine. This is Arginine exporter protein ArgO from Salmonella paratyphi C (strain RKS4594).